Reading from the N-terminus, the 250-residue chain is DNA repair protein RecO (250 aa).

This sequence belongs to the RecO family.

Functionally, involved in DNA repair and RecF pathway recombination. This is DNA repair protein RecO from Thermodesulfovibrio yellowstonii (strain ATCC 51303 / DSM 11347 / YP87).